Consider the following 132-residue polypeptide: Putative holo-[acyl-carrier-protein] synthase (132 aa).

Aspartate 6 and glutamate 67 together coordinate Mg(2+).

It belongs to the P-Pant transferase superfamily. AcpS family.

It carries out the reaction apo-[ACP] + CoA = holo-[ACP] + adenosine 3',5'-bisphosphate + H(+). Its function is as follows. Transfers the 4'-phosphopantetheine moiety from coenzyme A to a Ser of acyl-carrier-protein. This chain is Putative holo-[acyl-carrier-protein] synthase (new8), found in Schizosaccharomyces pombe (strain 972 / ATCC 24843) (Fission yeast).